Consider the following 346-residue polypeptide: Phosphoribosylformylglycinamidine cyclo-ligase (346 aa).

It belongs to the AIR synthase family.

It is found in the cytoplasm. The catalysed reaction is 2-formamido-N(1)-(5-O-phospho-beta-D-ribosyl)acetamidine + ATP = 5-amino-1-(5-phospho-beta-D-ribosyl)imidazole + ADP + phosphate + H(+). The protein operates within purine metabolism; IMP biosynthesis via de novo pathway; 5-amino-1-(5-phospho-D-ribosyl)imidazole from N(2)-formyl-N(1)-(5-phospho-D-ribosyl)glycinamide: step 2/2. The polypeptide is Phosphoribosylformylglycinamidine cyclo-ligase (Bacillus cereus (strain ATCC 10987 / NRS 248)).